The primary structure comprises 91 residues: uncharacterized protein (91 aa).

This is an uncharacterized protein from Vaccinia virus (strain Copenhagen) (VACV).